Reading from the N-terminus, the 517-residue chain is Meiosis-specific transcription factor mei4 (517 aa).

The segment at residues 81–172 (KPPCSYATLI…QNFVSVRLHR (92 aa)) is a DNA-binding region (fork-head). Residues 170 to 278 (LHRSHSTDSN…PNAETQEDLP (109 aa)) are disordered. Low complexity predominate over residues 209–223 (NSFNSSTSTSGSSSN). Polar residues predominate over residues 230-246 (NDASQPSNQDSSLNSNI). A compositionally biased stretch (low complexity) spans 254 to 270 (SNVQSNSSSSENVPKPN).

The protein resides in the nucleus. Functionally, functions as a meiosis-specific transcription factor. Binds to the 5'-GTAAAYA-3' consensus sequence of the promoter of the spo6 gene. In Schizosaccharomyces pombe (strain 972 / ATCC 24843) (Fission yeast), this protein is Meiosis-specific transcription factor mei4 (mei4).